The primary structure comprises 179 residues: ATP synthase subunit delta (179 aa).

Belongs to the ATPase delta chain family. As to quaternary structure, F-type ATPases have 2 components, F(1) - the catalytic core - and F(0) - the membrane proton channel. F(1) has five subunits: alpha(3), beta(3), gamma(1), delta(1), epsilon(1). F(0) has three main subunits: a(1), b(2) and c(10-14). The alpha and beta chains form an alternating ring which encloses part of the gamma chain. F(1) is attached to F(0) by a central stalk formed by the gamma and epsilon chains, while a peripheral stalk is formed by the delta and b chains.

Its subcellular location is the cell inner membrane. Its function is as follows. F(1)F(0) ATP synthase produces ATP from ADP in the presence of a proton or sodium gradient. F-type ATPases consist of two structural domains, F(1) containing the extramembraneous catalytic core and F(0) containing the membrane proton channel, linked together by a central stalk and a peripheral stalk. During catalysis, ATP synthesis in the catalytic domain of F(1) is coupled via a rotary mechanism of the central stalk subunits to proton translocation. This protein is part of the stalk that links CF(0) to CF(1). It either transmits conformational changes from CF(0) to CF(1) or is implicated in proton conduction. The sequence is that of ATP synthase subunit delta from Burkholderia cenocepacia (strain ATCC BAA-245 / DSM 16553 / LMG 16656 / NCTC 13227 / J2315 / CF5610) (Burkholderia cepacia (strain J2315)).